The following is a 292-amino-acid chain: Galactinol synthase 2 (292 aa).

The active site involves Lys-65. The Mn(2+) site is built by Asp-81, Asp-83, and His-218.

This sequence belongs to the glycosyltransferase 8 family. Galactosyltransferase subfamily. Requires a divalent metal cation as cofactor. As to expression, present in phloem-associated intermediary cells. Weakly expressed in leaves.

It is found in the cytoplasm. It catalyses the reaction myo-inositol + UDP-alpha-D-galactose = alpha-D-galactosyl-(1-&gt;3)-1D-myo-inositol + UDP + H(+). May promote plant stress tolerance. Galactinol synthase mainly involved in the biosynthesis of transport raffinose family oligosaccharides (RFOs) that function as osmoprotectants. This is Galactinol synthase 2 (GOLS2) from Ajuga reptans (Bugle).